Consider the following 453-residue polypeptide: ACT domain-containing protein ACR3 (453 aa).

ACT domains are found at residues 37–112 (LVKV…SASQ), 130–212 (SIEI…KFAR), 266–341 (VINV…RVSE), and 344–423 (SLEL…VPSR).

As to expression, expressed in roots, cotyledons, rosette and cauline leaves, sepals, style, and pedicels and tips of young developing siliques.

Its function is as follows. May bind amino acids. The polypeptide is ACT domain-containing protein ACR3 (Arabidopsis thaliana (Mouse-ear cress)).